Here is a 58-residue protein sequence, read N- to C-terminus: MSKTVVKKNESLEDALRRFKRTVSKSGTIQEVRKREFYEKPSVKRKKKSEAARKRKFK.

This sequence belongs to the bacterial ribosomal protein bS21 family.

This chain is Small ribosomal subunit protein bS21, found in Staphylococcus saprophyticus subsp. saprophyticus (strain ATCC 15305 / DSM 20229 / NCIMB 8711 / NCTC 7292 / S-41).